The chain runs to 548 residues: Natural resistance-associated macrophage protein 1 (548 aa).

The segment at 1 to 38 (MPGDMGPPKQGGTRYGSISSPPSPGPQQAPPGGTYLSE) is disordered. The Cytoplasmic segment spans residues 1–55 (MPGDMGPPKQGGTRYGSISSPPSPGPQQAPPGGTYLSEKIPIPDTESGAFSLRKL). A helical membrane pass occupies residues 56-73 (WAFTGPGFLMSIAFLDPG). Residues 74–82 (NIESDLQAG) lie on the Extracellular side of the membrane. A helical transmembrane segment spans residues 83–102 (AVAGFKLLWVLLWATVLGLL). Residues 103-139 (CQRLAARLGVVTGKDLGEVCHLYYPKVPRILLWLTIE) are Cytoplasmic-facing. A helical membrane pass occupies residues 140 to 160 (LAIVGSDMQEVIGTAIAFSLL). Over 161 to 164 (SAGR) the chain is Extracellular. The helical transmembrane segment at 165-184 (IPLWGGVLITIVDTFFFLFL) threads the bilayer. Residues 185-193 (DNYGLRKLE) are Cytoplasmic-facing. Residues 194 to 214 (AFFGFLITIMALTFGYEYVVA) traverse the membrane as a helical segment. At 215–237 (RPAQGALLQGLFLPSCAGCGQPE) the chain is on the extracellular side. A helical transmembrane segment spans residues 238 to 256 (LLQAVGIVGAIIMPHNIYL). The Cytoplasmic portion of the chain corresponds to 257–284 (HSSLVKSREVDRSRRADIREANMYFLIE). Residues 285-304 (ATIALSVSFLINLFVMAVFG) form a helical membrane-spanning segment. Residues 305-346 (QAFYKQTNQAAFNICANSSLHDYATIFPRNNLTVAVDIYQGG) are Extracellular-facing. N-linked (GlcNAc...) asparagine glycans are attached at residues N321 and N335. The chain crosses the membrane as a helical span at residues 347 to 366 (VILGCLFGPAALYIWAVGLL). The Cytoplasmic portion of the chain corresponds to 367 to 397 (AAGQSSTMTGTYAGQFVMEGFLKLRWSRFAR). The chain crosses the membrane as a helical span at residues 398–415 (VLLTRSCAILPTVLVAVF). Residues 416 to 426 (RDLRDLSGLND) are Extracellular-facing. Residues 427–447 (LLNVLQSLLLPFAVLPILTFT) form a helical membrane-spanning segment. At 448–463 (SMPAVMQEFANGLVSK) the chain is on the cytoplasmic side. The helical transmembrane segment at 464 to 485 (VISSSIMVLVCAVNLYFVISYV) threads the bilayer. Residues 486–493 (PSLPHPDY) are Extracellular-facing. The helical transmembrane segment at 494 to 513 (FSLVALLAAAYLGLTTYLVW) threads the bilayer. Residues 514-548 (TCLITQGATLLAHSSHQRFLYGLPEEDQENGRTSG) are Cytoplasmic-facing.

This sequence belongs to the NRAMP family.

The protein localises to the late endosome membrane. It localises to the lysosome membrane. The catalysed reaction is Zn(2+)(in) + H(+)(out) = Zn(2+)(out) + H(+)(in). It carries out the reaction Fe(2+)(in) + H(+)(out) = Fe(2+)(out) + H(+)(in). It catalyses the reaction Mn(2+)(in) + H(+)(out) = Mn(2+)(out) + H(+)(in). Its function is as follows. Macrophage-specific antiporter that fluxes metal ions in either direction against a proton gradient. Localized to late endosomal lysosomal membranes, delivers bivalent cations from the cytosol into these acidic compartments where they may directly affect antimicrobial activity. Involved in iron metabolism and host natural resistance to infection with intracellular parasites. Pathogen resistance involves sequestration of Fe(2+) and Mn(2+), cofactors of both prokaryotic and eukaryotic catalases and superoxide dismutases, not only to protect the macrophage against its own generation of reactive oxygen species, but to deny the cations to the pathogen for synthesis of its protective enzymes. The sequence is that of Natural resistance-associated macrophage protein 1 (SLC11A1) from Cervus elaphus (Red deer).